The following is a 428-amino-acid chain: Cyclic AMP-responsive element-binding protein 3-like protein 3-A (428 aa).

Topologically, residues 1–286 (MENYSDQGGD…VMNGSNKPVQ (286 aa)) are cytoplasmic. Low complexity predominate over residues 67 to 83 (VSGSPVWSPSPSDSGIS). The segment at 67–104 (VSGSPVWSPSPSDSGISEDPHSDHIDSPPPNASPPMEP) is disordered. Pro residues predominate over residues 93–103 (SPPPNASPPME). One can recognise a bZIP domain in the interval 210–273 (ILKKIRRKIR…ISLMEQLRRL (64 aa)). The segment at 212 to 241 (KKIRRKIRNKQSAQESRKKKKEYIDGLESR) is basic motif. The interval 252–273 (LQRKVFQLEKCNISLMEQLRRL) is leucine-zipper. The helical; Signal-anchor for type II membrane protein transmembrane segment at 287-303 (AGTCVLVLLLSFTLILL) threads the bilayer. Over 304–428 (PNLKPFTDTK…SRRSPHADDM (125 aa)) the chain is Lumenal. A disordered region spans residues 381–428 (TEYDPESHNHSFDQHDEHHHGDPITGHVATVTLNPRRGSRRSPHADDM). Residues 385–402 (PESHNHSFDQHDEHHHGD) are compositionally biased toward basic and acidic residues. The N-linked (GlcNAc...) asparagine glycan is linked to Asn389.

It belongs to the bZIP family. ATF subfamily. In terms of assembly, binds DNA as a dimer. Controlled by regulated intramembrane proteolysis (RIP). A fragment containing the cytoplasmic transcription factor domain is released by proteolysis. The cleavage seems to be performed sequentially by site-1 and site-2 proteases.

It is found in the endoplasmic reticulum membrane. The protein resides in the nucleus. Its function is as follows. Transcriptional activator. Binds the cAMP response element (CRE). Activates transcription through box-B element and CRE. Seems to function synergistically with atf6. Regulates FGF21 transcription. This Danio rerio (Zebrafish) protein is Cyclic AMP-responsive element-binding protein 3-like protein 3-A (creb3l3a).